A 98-amino-acid chain; its full sequence is NADH-ubiquinone oxidoreductase chain 4L (98 aa).

Transmembrane regions (helical) follow at residues 1–21, 29–49, and 61–81; these read MPVVYVNIFLAFIVSLVGLLI, SLLCLEGMMLSLFVMLTVTVL, and IILLVFAACEAALGLSLLVMV.

Belongs to the complex I subunit 4L family. Core subunit of respiratory chain NADH dehydrogenase (Complex I) which is composed of 45 different subunits.

It localises to the mitochondrion inner membrane. It carries out the reaction a ubiquinone + NADH + 5 H(+)(in) = a ubiquinol + NAD(+) + 4 H(+)(out). In terms of biological role, core subunit of the mitochondrial membrane respiratory chain NADH dehydrogenase (Complex I) which catalyzes electron transfer from NADH through the respiratory chain, using ubiquinone as an electron acceptor. Part of the enzyme membrane arm which is embedded in the lipid bilayer and involved in proton translocation. This Ursus maritimus (Polar bear) protein is NADH-ubiquinone oxidoreductase chain 4L (MT-ND4L).